Reading from the N-terminus, the 314-residue chain is R2-like ligand binding oxidase (314 aa).

Glu-68, Glu-101, and His-104 together coordinate Mn(2+). Positions 71–162 form a cross-link, 3-(O4'-tyrosyl)-valine (Val-Tyr); sequence VTEDIQPFMS…AAQVRASVTY (92 aa). Residue Glu-101 coordinates Fe cation. Fe cation contacts are provided by Glu-167, Glu-202, and His-205.

This sequence belongs to the ribonucleoside diphosphate reductase small chain family. R2-like ligand binding oxidase subfamily. Homodimer. It depends on Fe cation as a cofactor. Mn(2+) serves as cofactor.

Its function is as follows. Probable oxidase that might be involved in lipid metabolism. The polypeptide is R2-like ligand binding oxidase (Mycobacterium tuberculosis (strain ATCC 25177 / H37Ra)).